The sequence spans 75 residues: Carwaprin-b (75 aa).

Positions 1-24 (MSSGGLLLLLGLLTLWAELTPVSS) are cleaved as a signal peptide. Positions 27–72 (RPKKPGLCPPRPQKPPCVRECKNDWRCPGEQKCCRYGCIYECRDPI) constitute a WAP domain. 4 disulfides stabilise this stretch: Cys-34–Cys-60, Cys-43–Cys-64, Cys-47–Cys-59, and Cys-53–Cys-68.

The protein belongs to the venom waprin family. In terms of tissue distribution, expressed by the venom gland.

It is found in the secreted. Functionally, damages membranes of susceptible bacteria. Has no hemolytic activity. Not toxic to mice. Does not inhibit the proteinases elastase and cathepsin G. This Tropidechis carinatus (Australian rough-scaled snake) protein is Carwaprin-b.